We begin with the raw amino-acid sequence, 273 residues long: Progestin and adipoQ receptor family member 4 (273 aa).

5 helical membrane-spanning segments follow: residues 52–72 (IYTH…TMPW), 79–99 (GWLG…SVLY), 115–135 (LLAL…LPII), 185–205 (LLVF…SLPC), and 245–265 (LLSV…LLWA).

The protein belongs to the ADIPOR family. Interacts with CERS2 and CERS5; the interaction regulates CERS2 and CERS5 stabilities and activities and is inhibited in presence of ceramides. As to expression, expressed in adipose tissue.

The protein localises to the golgi apparatus membrane. Plays a role in maintaining adipose tissue function through the regulation of ceramide levels. Mediates the stability of ceramide synthetases, CERS2 and CERS5, and their activities. This chain is Progestin and adipoQ receptor family member 4, found in Mus musculus (Mouse).